The sequence spans 265 residues: Phosphatidylserine decarboxylase proenzyme (265 aa).

Residues D86, H142, and S226 each act as charge relay system; for autoendoproteolytic cleavage activity in the active site. S226 (schiff-base intermediate with substrate; via pyruvic acid; for decarboxylase activity) is an active-site residue. S226 is subject to Pyruvic acid (Ser); by autocatalysis.

The protein belongs to the phosphatidylserine decarboxylase family. PSD-B subfamily. Prokaryotic type I sub-subfamily. In terms of assembly, heterodimer of a large membrane-associated beta subunit and a small pyruvoyl-containing alpha subunit. Requires pyruvate as cofactor. In terms of processing, is synthesized initially as an inactive proenzyme. Formation of the active enzyme involves a self-maturation process in which the active site pyruvoyl group is generated from an internal serine residue via an autocatalytic post-translational modification. Two non-identical subunits are generated from the proenzyme in this reaction, and the pyruvate is formed at the N-terminus of the alpha chain, which is derived from the carboxyl end of the proenzyme. The autoendoproteolytic cleavage occurs by a canonical serine protease mechanism, in which the side chain hydroxyl group of the serine supplies its oxygen atom to form the C-terminus of the beta chain, while the remainder of the serine residue undergoes an oxidative deamination to produce ammonia and the pyruvoyl prosthetic group on the alpha chain. During this reaction, the Ser that is part of the protease active site of the proenzyme becomes the pyruvoyl prosthetic group, which constitutes an essential element of the active site of the mature decarboxylase.

The protein resides in the cell membrane. The catalysed reaction is a 1,2-diacyl-sn-glycero-3-phospho-L-serine + H(+) = a 1,2-diacyl-sn-glycero-3-phosphoethanolamine + CO2. It functions in the pathway phospholipid metabolism; phosphatidylethanolamine biosynthesis; phosphatidylethanolamine from CDP-diacylglycerol: step 2/2. In terms of biological role, catalyzes the formation of phosphatidylethanolamine (PtdEtn) from phosphatidylserine (PtdSer). This Anoxybacillus flavithermus (strain DSM 21510 / WK1) protein is Phosphatidylserine decarboxylase proenzyme.